The primary structure comprises 73 residues: Large ribosomal subunit protein uL29 (73 aa).

The protein belongs to the universal ribosomal protein uL29 family.

The protein is Large ribosomal subunit protein uL29 of Synechococcus sp. (strain JA-2-3B'a(2-13)) (Cyanobacteria bacterium Yellowstone B-Prime).